The sequence spans 404 residues: Propionate kinase (404 aa).

This sequence belongs to the acetokinase family. PduW subfamily.

The protein resides in the cytoplasm. The catalysed reaction is propanoate + ATP = propanoyl phosphate + ADP. Its pathway is polyol metabolism; 1,2-propanediol degradation. In terms of biological role, works with phosphate acetyltransferase (pta) to capture exogenous propionate and regenerate propionyl-CoA during degradation of 1,2-propanediol (1,2-PD). Its function is as follows. Expression of a cosmid containing the full 21-gene pdu operon in E.coli allows E.coli to grow on 1,2-propanediol (1,2-PD) with the appearance of bacterial microcompartments (BMC) in its cytoplasm. This chain is Propionate kinase, found in Citrobacter freundii.